A 130-amino-acid chain; its full sequence is Small ribosomal subunit protein uS9 (130 aa).

Belongs to the universal ribosomal protein uS9 family.

The protein is Small ribosomal subunit protein uS9 of Tolumonas auensis (strain DSM 9187 / NBRC 110442 / TA 4).